A 310-amino-acid chain; its full sequence is Protoheme IX farnesyltransferase 2 (310 aa).

The next 9 helical transmembrane spans lie at 25 to 45, 49 to 69, 98 to 118, 121 to 141, 145 to 165, 176 to 196, 222 to 242, 245 to 265, and 277 to 297; these read PGIIFGNLISVAGGFLLAAKG, LVLMLASLVGLSLVVASGCAI, HVLLFGIAIGVLGFGILALFT, LALLFAAIGYVVYVGIYSLYM, SVYGTLVGSFSGAVPPVVGYC, VILLLMFSLWQMPHSYAIAIF, IVLYIAVFALVSTMLPLAGYT, AFMAVTCATSLWWLTMALKGY, and QVFGFSIITITALSVTMALDF.

Belongs to the UbiA prenyltransferase family. Protoheme IX farnesyltransferase subfamily.

It is found in the cell inner membrane. It carries out the reaction heme b + (2E,6E)-farnesyl diphosphate + H2O = Fe(II)-heme o + diphosphate. Its pathway is porphyrin-containing compound metabolism; heme O biosynthesis; heme O from protoheme: step 1/1. Functionally, converts heme B (protoheme IX) to heme O by substitution of the vinyl group on carbon 2 of heme B porphyrin ring with a hydroxyethyl farnesyl side group. In Shewanella sp. (strain MR-7), this protein is Protoheme IX farnesyltransferase 2.